A 339-amino-acid chain; its full sequence is Anthranilate phosphoribosyltransferase (339 aa).

5-phospho-alpha-D-ribose 1-diphosphate is bound by residues Gly-79, 82–83, Ser-87, 89–92, 107–115, and Ser-119; these read GD, NIST, and KHGNRSISS. Gly-79 contacts anthranilate. Position 91 (Ser-91) interacts with Mg(2+). Asn-110 is a binding site for anthranilate. Arg-165 contributes to the anthranilate binding site. Residues Asp-224 and Glu-225 each coordinate Mg(2+).

This sequence belongs to the anthranilate phosphoribosyltransferase family. Homodimer. It depends on Mg(2+) as a cofactor.

The catalysed reaction is N-(5-phospho-beta-D-ribosyl)anthranilate + diphosphate = 5-phospho-alpha-D-ribose 1-diphosphate + anthranilate. It participates in amino-acid biosynthesis; L-tryptophan biosynthesis; L-tryptophan from chorismate: step 2/5. In terms of biological role, catalyzes the transfer of the phosphoribosyl group of 5-phosphorylribose-1-pyrophosphate (PRPP) to anthranilate to yield N-(5'-phosphoribosyl)-anthranilate (PRA). The chain is Anthranilate phosphoribosyltransferase from Listeria innocua serovar 6a (strain ATCC BAA-680 / CLIP 11262).